A 367-amino-acid chain; its full sequence is D-alanine--D-alanine ligase (367 aa).

Residues 145–351 (KRLLRDAGLP…QPALMDALIA (207 aa)) enclose the ATP-grasp domain. ATP is bound at residue 174–229 (HAVGCSELFIKPANLGSSVGISKARTPQEFAAACDLALRFDGKILIERCISPVREI). Residues Asp306, Glu318, and Asn320 each contribute to the Mg(2+) site.

This sequence belongs to the D-alanine--D-alanine ligase family. Mg(2+) serves as cofactor. The cofactor is Mn(2+).

The protein resides in the cytoplasm. The catalysed reaction is 2 D-alanine + ATP = D-alanyl-D-alanine + ADP + phosphate + H(+). It participates in cell wall biogenesis; peptidoglycan biosynthesis. Its function is as follows. Cell wall formation. This chain is D-alanine--D-alanine ligase, found in Bradyrhizobium sp. (strain BTAi1 / ATCC BAA-1182).